Reading from the N-terminus, the 375-residue chain is MTQTRQQLGKARRWIIKIGSALLTNEGRGLDHEALAGWAEQIARLRASGREVVLVSSGAVAEGMSRLGWTTRPHALHELQAAAAVGQMGLVQAYESIFQRHGLRAAQVLLTHDDLSNRRRYLNARSTLRTLLALGVIPVVNENDTVATDEIRFGDNDTLAALVGNLTEAQVLVILTDQKGLFDRDPRAHADAQLVSEGLAMDPELLKLAAPTFGQLGRGGMATKLHAAARAARSGAYTLIASGREPRVLERIAEGEQIGTLLCPDKEPLAARKQWIAGQLIAKGELILDTGATKVLREAGRSLLPVGVTHVKGEFSRGDVVTCVDPDGRPVARGLVNYSADEARRIMKHRADEIEGILGYVDEPELIHRDNLVLL.

Lysine 17 contributes to the ATP binding site. Substrate is bound by residues serine 57, aspartate 144, and asparagine 156. An ATP-binding site is contributed by threonine 176–aspartate 177. Positions lysine 283–valine 361 constitute a PUA domain.

Belongs to the glutamate 5-kinase family.

It is found in the cytoplasm. It carries out the reaction L-glutamate + ATP = L-glutamyl 5-phosphate + ADP. It functions in the pathway amino-acid biosynthesis; L-proline biosynthesis; L-glutamate 5-semialdehyde from L-glutamate: step 1/2. Its function is as follows. Catalyzes the transfer of a phosphate group to glutamate to form L-glutamate 5-phosphate. This is Glutamate 5-kinase from Thioalkalivibrio sulfidiphilus (strain HL-EbGR7).